We begin with the raw amino-acid sequence, 218 residues long: Protein GrpE (218 aa).

Composition is skewed to basic and acidic residues over residues 1 to 13 and 20 to 32; these read MSKN…HQNN and VDKK…NKQE. Residues 1 to 32 form a disordered region; the sequence is MSKNNENIKHQNNDKVNNQVDKKETKNHNKQE.

The protein belongs to the GrpE family. In terms of assembly, homodimer.

The protein resides in the cytoplasm. In terms of biological role, participates actively in the response to hyperosmotic and heat shock by preventing the aggregation of stress-denatured proteins, in association with DnaK and GrpE. It is the nucleotide exchange factor for DnaK and may function as a thermosensor. Unfolded proteins bind initially to DnaJ; upon interaction with the DnaJ-bound protein, DnaK hydrolyzes its bound ATP, resulting in the formation of a stable complex. GrpE releases ADP from DnaK; ATP binding to DnaK triggers the release of the substrate protein, thus completing the reaction cycle. Several rounds of ATP-dependent interactions between DnaJ, DnaK and GrpE are required for fully efficient folding. This is Protein GrpE from Ureaplasma parvum serovar 3 (strain ATCC 27815 / 27 / NCTC 11736).